We begin with the raw amino-acid sequence, 563 residues long: Arginine--tRNA ligase (563 aa).

Positions 120 to 130 (PNIAKPFHIGH) match the 'HIGH' region motif.

The protein belongs to the class-I aminoacyl-tRNA synthetase family. In terms of assembly, monomer.

It is found in the cytoplasm. It carries out the reaction tRNA(Arg) + L-arginine + ATP = L-arginyl-tRNA(Arg) + AMP + diphosphate. The chain is Arginine--tRNA ligase from Clostridium botulinum (strain 657 / Type Ba4).